The following is a 514-amino-acid chain: ATP synthase subunit alpha (514 aa).

Residue 170–177 participates in ATP binding; the sequence is GDRQIGKT.

It belongs to the ATPase alpha/beta chains family. As to quaternary structure, F-type ATPases have 2 components, CF(1) - the catalytic core - and CF(0) - the membrane proton channel. CF(1) has five subunits: alpha(3), beta(3), gamma(1), delta(1), epsilon(1). CF(0) has three main subunits: a(1), b(2) and c(9-12). The alpha and beta chains form an alternating ring which encloses part of the gamma chain. CF(1) is attached to CF(0) by a central stalk formed by the gamma and epsilon chains, while a peripheral stalk is formed by the delta and b chains.

The protein resides in the cell inner membrane. The catalysed reaction is ATP + H2O + 4 H(+)(in) = ADP + phosphate + 5 H(+)(out). Produces ATP from ADP in the presence of a proton gradient across the membrane. The alpha chain is a regulatory subunit. The chain is ATP synthase subunit alpha from Pseudomonas putida (strain ATCC 700007 / DSM 6899 / JCM 31910 / BCRC 17059 / LMG 24140 / F1).